We begin with the raw amino-acid sequence, 157 residues long: Ribosome maturation factor RimP (157 aa).

The protein belongs to the RimP family.

The protein localises to the cytoplasm. Functionally, required for maturation of 30S ribosomal subunits. The sequence is that of Ribosome maturation factor RimP from Lactococcus lactis subsp. lactis (strain IL1403) (Streptococcus lactis).